The sequence spans 196 residues: Pyridoxal 5'-phosphate synthase subunit PdxT (196 aa).

47 to 49 provides a ligand contact to L-glutamine; the sequence is GES. C79 acts as the Nucleophile in catalysis. L-glutamine is bound by residues R106 and 134–135; that span reads IR. Catalysis depends on charge relay system residues H170 and E172.

It belongs to the glutaminase PdxT/SNO family. In the presence of PdxS, forms a dodecamer of heterodimers. Only shows activity in the heterodimer.

The enzyme catalyses aldehydo-D-ribose 5-phosphate + D-glyceraldehyde 3-phosphate + L-glutamine = pyridoxal 5'-phosphate + L-glutamate + phosphate + 3 H2O + H(+). The catalysed reaction is L-glutamine + H2O = L-glutamate + NH4(+). Its pathway is cofactor biosynthesis; pyridoxal 5'-phosphate biosynthesis. Catalyzes the hydrolysis of glutamine to glutamate and ammonia as part of the biosynthesis of pyridoxal 5'-phosphate. The resulting ammonia molecule is channeled to the active site of PdxS. This chain is Pyridoxal 5'-phosphate synthase subunit PdxT, found in Bacillus cereus (strain Q1).